We begin with the raw amino-acid sequence, 430 residues long: Aspartate aminotransferase, mitochondrial (430 aa).

A mitochondrion-targeting transit peptide spans 1-29 (MALLHSARVLSGVASAFHPGLAAAASARA). At threonine 48 the chain carries Phosphothreonine. Lysine 59 carries the post-translational modification N6-acetyllysine. Residue glycine 65 coordinates substrate. Lysine 73 carries the post-translational modification N6-acetyllysine; alternate. Lysine 73 carries the N6-succinyllysine; alternate modification. Lysine 82 carries the N6-acetyllysine modification. N6-acetyllysine; alternate is present on lysine 90. Lysine 90 carries the N6-succinyllysine; alternate modification. Residue tyrosine 96 is modified to 3'-nitrotyrosine; alternate. At tyrosine 96 the chain carries Phosphotyrosine; alternate. An N6-acetyllysine; alternate modification is found at lysine 122. Lysine 122 is subject to N6-succinyllysine; alternate. Serine 143 carries the phosphoserine modification. Lysine 159 is subject to N6-acetyllysine; alternate. N6-succinyllysine; alternate is present on lysine 159. Tryptophan 162 is a substrate binding site. Position 185 is an N6-acetyllysine; alternate (lysine 185). Residue lysine 185 is modified to N6-succinyllysine; alternate. Asparagine 215 contributes to the substrate binding site. Lysine 227 bears the N6-succinyllysine mark. Lysine 234 carries the post-translational modification N6-acetyllysine. Residues lysine 279 and lysine 296 each carry the N6-acetyllysine; alternate modification. Lysine 279 carries the post-translational modification N6-(pyridoxal phosphate)lysine; alternate. The residue at position 296 (lysine 296) is an N6-succinyllysine; alternate. Lysine 302 carries the N6-acetyllysine modification. An N6-acetyllysine; alternate modification is found at lysine 309. Lysine 309 bears the N6-succinyllysine; alternate mark. The residue at position 313 (arginine 313) is an Asymmetric dimethylarginine. At lysine 338 the chain carries N6-acetyllysine; alternate. The residue at position 338 (lysine 338) is an N6-succinyllysine; alternate. The residue at position 345 (lysine 345) is an N6-acetyllysine. Lysine 363 carries the post-translational modification N6-acetyllysine; alternate. Residue lysine 363 is modified to N6-succinyllysine; alternate. N6-acetyllysine occurs at positions 364 and 387. Residues lysine 396 and lysine 404 each carry the N6-acetyllysine; alternate modification. Residues lysine 396 and lysine 404 each carry the N6-succinyllysine; alternate modification. Arginine 407 provides a ligand contact to substrate.

This sequence belongs to the class-I pyridoxal-phosphate-dependent aminotransferase family. As to quaternary structure, homodimer. The cofactor is pyridoxal 5'-phosphate.

The protein resides in the mitochondrion matrix. It localises to the cell membrane. The catalysed reaction is L-aspartate + 2-oxoglutarate = oxaloacetate + L-glutamate. The enzyme catalyses L-kynurenine + 2-oxoglutarate = kynurenate + L-glutamate + H2O. In terms of biological role, catalyzes the irreversible transamination of the L-tryptophan metabolite L-kynurenine to form kynurenic acid (KA). As a member of the malate-aspartate shuttle, it has a key role in the intracellular NAD(H) redox balance. Is important for metabolite exchange between mitochondria and cytosol, and for amino acid metabolism. Facilitates cellular uptake of long-chain free fatty acids. This is Aspartate aminotransferase, mitochondrial (GOT2) from Oryctolagus cuniculus (Rabbit).